A 49-amino-acid polypeptide reads, in one-letter code: Large ribosomal subunit protein bL33 (49 aa).

The protein belongs to the bacterial ribosomal protein bL33 family.

This Nitratidesulfovibrio vulgaris (strain ATCC 29579 / DSM 644 / CCUG 34227 / NCIMB 8303 / VKM B-1760 / Hildenborough) (Desulfovibrio vulgaris) protein is Large ribosomal subunit protein bL33.